Consider the following 139-residue polypeptide: Serpin-like protein HMSD (139 aa).

A signal peptide spans 1-20; the sequence is MSISSALAMVFMGAKGNTAA. Residue Asn-50 is glycosylated (N-linked (GlcNAc...) asparagine).

This sequence belongs to the serpin family. In terms of tissue distribution, highly expressed in dendritic cells and primary leukemia cells, especially those of myeloid lineage.

It is found in the secreted. Functionally, putative serine protease inhibitor. This is Serpin-like protein HMSD (HMSD) from Homo sapiens (Human).